The following is a 142-amino-acid chain: Universal stress protein G (142 aa).

Belongs to the universal stress protein A family.

This is Universal stress protein G (uspG) from Shigella flexneri.